The following is a 357-amino-acid chain: Aurora kinase A- and ninein-interacting protein (357 aa).

The segment covering 71 to 91 has biased composition (polar residues); the sequence is LQPGKTNGSDQKSVSSHTESQ. Residues 71–98 are disordered; the sequence is LQPGKTNGSDQKSVSSHTESQINKESKK. Residues 187–357 form an interaction with AURKA region; sequence RKEEKGDSAR…EGNQVIRHQF (171 aa). Phosphoserine is present on residues Ser267 and Ser292. The segment at 281 to 357 is interaction with RBBP8/CtIP; the sequence is KDSWSQLFTE…EGNQVIRHQF (77 aa).

Belongs to the AUNIP family. As to quaternary structure, interacts (via C-terminus) with AURKA (via C-terminus). Interacts (via N-terminus) with NIN; this interaction blocks NIN phosphorylation by both AURKA and GSK3B. Identified in a complex with NIN and AURKA. Interacts with RBBP8/CtIP. As to expression, expressed in heart, skeletal muscles, placenta and testis.

The protein localises to the nucleus. Its subcellular location is the chromosome. The protein resides in the cytoplasm. It localises to the cytoskeleton. It is found in the microtubule organizing center. The protein localises to the centrosome. Its subcellular location is the spindle pole. DNA-binding protein that accumulates at DNA double-strand breaks (DSBs) following DNA damage and promotes DNA resection and homologous recombination. Serves as a sensor of DNA damage: binds DNA with a strong preference for DNA substrates that mimic structures generated at stalled replication forks, and anchors RBBP8/CtIP to DSB sites to promote DNA end resection and ensuing homologous recombination repair. Inhibits non-homologous end joining (NHEJ). Required for the dynamic movement of AURKA at the centrosomes and spindle apparatus during the cell cycle. In Homo sapiens (Human), this protein is Aurora kinase A- and ninein-interacting protein.